Reading from the N-terminus, the 165-residue chain is Nucleotide-binding protein PMT9312_0481 (165 aa).

The protein belongs to the YajQ family.

Its function is as follows. Nucleotide-binding protein. This Prochlorococcus marinus (strain MIT 9312) protein is Nucleotide-binding protein PMT9312_0481.